Reading from the N-terminus, the 203-residue chain is MIYISMFKFLFKILIGEIMIKLLYEGILIRENGIIKKASSSSTLIITDNNNIIVDTSTKDMENIIIKGLSELNLSPNDIDVVINTHLHYDHIENNPIFKNATFYASPKEFGFNDNFEDFKKFKDKEIEIIETPGHTYGSISVIYKDYVVVGDASPLKNNILKMIPPKLNVDEKLALESLKKIRKLRKNVITGHEGIVYKEKLL.

Zn(2+) contacts are provided by His-86, His-88, Asp-90, His-91, His-135, Asp-152, and His-193.

It belongs to the metallo-beta-lactamase superfamily. Zn(2+) serves as cofactor.

This is Probable metallo-hydrolase MJ0296 from Methanocaldococcus jannaschii (strain ATCC 43067 / DSM 2661 / JAL-1 / JCM 10045 / NBRC 100440) (Methanococcus jannaschii).